The following is a 734-amino-acid chain: Photosystem I P700 chlorophyll a apoprotein A2 (734 aa).

8 consecutive transmembrane segments (helical) span residues 46–69 (IFAS…FHVA), 135–158 (LYSG…LHLQ), 175–199 (LNHH…HVAI), 273–291 (IAHH…GHMY), 330–353 (LHFQ…QHMY), 369–395 (AALY…IFFV), 417–439 (AIIS…LYVH), and 517–535 (FLVH…LILV). Positions 559 and 568 each coordinate [4Fe-4S] cluster. 2 helical membrane passes run 575–596 (AFYL…YWHW) and 643–665 (LSVW…MFLI). Chlorophyll a contacts are provided by histidine 654, methionine 662, and tyrosine 670. A phylloquinone-binding site is contributed by tryptophan 671. Residues 707-727 (LVGLVHFTVGYIFTYAAFVIA) form a helical membrane-spanning segment.

The protein belongs to the PsaA/PsaB family. As to quaternary structure, the PsaA/B heterodimer binds the P700 chlorophyll special pair and subsequent electron acceptors. PSI consists of a core antenna complex that captures photons, and an electron transfer chain that converts photonic excitation into a charge separation. The eukaryotic PSI reaction center is composed of at least 11 subunits. It depends on P700 is a chlorophyll a/chlorophyll a' dimer, A0 is one or more chlorophyll a, A1 is one or both phylloquinones and FX is a shared 4Fe-4S iron-sulfur center. as a cofactor.

Its subcellular location is the plastid. It is found in the chloroplast thylakoid membrane. The catalysed reaction is reduced [plastocyanin] + hnu + oxidized [2Fe-2S]-[ferredoxin] = oxidized [plastocyanin] + reduced [2Fe-2S]-[ferredoxin]. PsaA and PsaB bind P700, the primary electron donor of photosystem I (PSI), as well as the electron acceptors A0, A1 and FX. PSI is a plastocyanin/cytochrome c6-ferredoxin oxidoreductase, converting photonic excitation into a charge separation, which transfers an electron from the donor P700 chlorophyll pair to the spectroscopically characterized acceptors A0, A1, FX, FA and FB in turn. Oxidized P700 is reduced on the lumenal side of the thylakoid membrane by plastocyanin or cytochrome c6. This is Photosystem I P700 chlorophyll a apoprotein A2 from Guillardia theta (Cryptophyte).